Consider the following 446-residue polypeptide: Long-chain fatty acid transport protein (446 aa).

The signal sequence occupies residues 1–25 (MSQKTLFTKSALAVAVALISTQAWS).

Belongs to the OmpP1/FadL family. In terms of assembly, has been isolated from outer membrane preparation as a homodimer.

The protein localises to the cell outer membrane. Involved in translocation of long-chain fatty acids across the outer membrane. It is a receptor for the bacteriophage T2. FadL may form a specific channel. This Escherichia coli (strain K12) protein is Long-chain fatty acid transport protein (fadL).